Here is a 126-residue protein sequence, read N- to C-terminus: Large ribosomal subunit protein bL12 (126 aa).

Belongs to the bacterial ribosomal protein bL12 family. Homodimer. Part of the ribosomal stalk of the 50S ribosomal subunit. Forms a multimeric L10(L12)X complex, where L10 forms an elongated spine to which 2 to 4 L12 dimers bind in a sequential fashion. Binds GTP-bound translation factors.

Forms part of the ribosomal stalk which helps the ribosome interact with GTP-bound translation factors. Is thus essential for accurate translation. This Solibacter usitatus (strain Ellin6076) protein is Large ribosomal subunit protein bL12.